A 761-amino-acid chain; its full sequence is Probable beta-galactosidase 2 (761 aa).

The N-terminal stretch at 1–23 (MGTIKNNFQLLWLILLIVVLVNG) is a signal peptide. Asparagine 39 and asparagine 110 each carry an N-linked (GlcNAc...) asparagine glycan. The active-site Proton donor is the glutamate 195. An N-linked (GlcNAc...) asparagine glycan is attached at asparagine 206. The active-site Nucleophile is the glutamate 267. N-linked (GlcNAc...) asparagine glycosylation is found at asparagine 385, asparagine 405, asparagine 438, asparagine 501, asparagine 552, asparagine 553, asparagine 577, asparagine 592, asparagine 642, asparagine 690, and asparagine 696.

It belongs to the glycosyl hydrolase 35 family.

It catalyses the reaction Hydrolysis of terminal non-reducing beta-D-galactose residues in beta-D-galactosides.. Functionally, cleaves beta-linked terminal galactosyl residues from gangliosides, glycoproteins, and glycosaminoglycans. This is Probable beta-galactosidase 2 (glb2) from Dictyostelium discoideum (Social amoeba).